We begin with the raw amino-acid sequence, 285 residues long: Secreted LysM effector slp2 (285 aa).

The N-terminal stretch at 1–16 is a signal peptide; it reads MLPITVVTLFAALAAA. The disordered stretch occupies residues 75–143; the sequence is GDAAKAGDAA…KGGDAAKGGN (69 aa). Basic and acidic residues predominate over residues 85–116; sequence KGGDAKGGDAKGGDAKGGDAKGGKGGDAKGGK. Residues 117–139 are compositionally biased toward gly residues; it reads GGDAAKGGKGGDAAKGGKGGDAA. 2 LysM domains span residues 157-201 and 237-281; these read VEHK…VLKI and FTRV…TINL.

It belongs to the secreted LysM effector family.

In terms of biological role, might have a role in sequestration of chitin oligosaccharides (breakdown products of fungal cell walls that are released during invasion and act as triggers of host immunity) to dampen host defense. In Pyricularia oryzae (strain 70-15 / ATCC MYA-4617 / FGSC 8958) (Rice blast fungus), this protein is Secreted LysM effector slp2.